We begin with the raw amino-acid sequence, 287 residues long: Large ribosomal subunit protein uL2 (287 aa).

Residues 221–287 (RGSVMNPCDH…SKRSRGGRDS (67 aa)) are disordered. Positions 271–287 (LRKRRKTSKRSRGGRDS) are enriched in basic residues.

It belongs to the universal ribosomal protein uL2 family. Part of the 50S ribosomal subunit. Forms a bridge to the 30S subunit in the 70S ribosome.

Functionally, one of the primary rRNA binding proteins. Required for association of the 30S and 50S subunits to form the 70S ribosome, for tRNA binding and peptide bond formation. It has been suggested to have peptidyltransferase activity; this is somewhat controversial. Makes several contacts with the 16S rRNA in the 70S ribosome. In Synechococcus sp. (strain CC9605), this protein is Large ribosomal subunit protein uL2.